A 223-amino-acid polypeptide reads, in one-letter code: Histone H1.5 (223 aa).

Low complexity predominate over residues 1–14; that stretch reads MSETAPAETAAPAP. The disordered stretch occupies residues 1–56; sequence MSETAPAETAAPAPVEKSPAKKKTTKKAGAAKRKATGPPVSELITKAVSASKERGG. Position 2 is an N-acetylserine (serine 2). The residue at position 2 (serine 2) is a Phosphoserine. Residue lysine 17 is modified to N6-acetyllysine. Serine 18 is subject to Phosphoserine. A compositionally biased stretch (basic residues) spans 20 to 35; it reads AKKKTTKKAGAAKRKA. Residue lysine 27 is modified to N6-methyllysine. The residue at position 34 (lysine 34) is an N6-(beta-hydroxybutyryl)lysine; alternate. Lysine 34 is subject to N6-succinyllysine; alternate. Threonine 36 carries the post-translational modification Phosphothreonine. The 74-residue stretch at 36 to 109 folds into the H15 domain; it reads TGPPVSELIT…GASGSFKLNK (74 aa). Lysine 46 carries the post-translational modification N6-acetyllysine. N6-(beta-hydroxybutyryl)lysine is present on lysine 52. Residue arginine 54 is modified to Citrulline. Lysine 64 bears the N6-(beta-hydroxybutyryl)lysine mark. Lysine 75 is modified (N6-acetyllysine). An N6-(beta-hydroxybutyryl)lysine mark is found at lysine 85, lysine 90, and lysine 106. A disordered region spans residues 91 to 223; that stretch reads GTLVQTKGTG…KAKKAVSKKK (133 aa). A compositionally biased stretch (basic residues) spans 119-130; it reads KAKKTGAAKAKK. 2 positions are modified to phosphothreonine: threonine 135 and threonine 152. Basic residues predominate over residues 137-158; the sequence is KKPKKTAGAKKTVKKTPKKAKK. Lysine 165 bears the N6-acetyllysine mark. The segment covering 166–184 has biased composition (basic residues); it reads KVAKSPKKAKAAAKPKKAA. A phosphoserine mark is found at serine 170 and serine 186. Basic residues predominate over residues 191-223; the sequence is KAVKSKASKPKVTKPKTAKPKAAKAKKAVSKKK.

The protein belongs to the histone H1/H5 family. In terms of assembly, interacts with MSX1. Post-translationally, H1 histones are progressively phosphorylated during the cell cycle, becoming maximally phosphorylated during late G2 phase and M phase, and being dephosphorylated sharply thereafter. In terms of processing, citrullination at Arg-54 (H1R54ci) by PADI4 takes place within the DNA-binding site of H1 and results in its displacement from chromatin and global chromatin decondensation, thereby promoting pluripotency and stem cell maintenance. Hydroxybutyrylation of histones is induced by starvation.

It localises to the nucleus. The protein localises to the chromosome. Its function is as follows. Histone H1 protein binds to linker DNA between nucleosomes forming the macromolecular structure known as the chromatin fiber. Histones H1 are necessary for the condensation of nucleosome chains into higher-order structured fibers. Also acts as a regulator of individual gene transcription through chromatin remodeling, nucleosome spacing and DNA methylation. This Mus musculus (Mouse) protein is Histone H1.5 (H1-5).